The following is a 227-amino-acid chain: Probable N-acetyltransferase family 8 member 5 (227 aa).

3 consecutive transmembrane segments (helical) span residues 29–49 (IPAAFRYTLLLPQTLLFLFVM), 53–73 (IVLVFGSWLLAVICIFFLLLL), and 201–221 (ISIIKWLITFSIIHFTYSFPS). The N-acetyltransferase domain occupies 69-213 (FLLLLLRLLA…IKWLITFSII (145 aa)).

Belongs to the camello family.

Its subcellular location is the membrane. Functionally, may play a role in regulation of gastrulation. This is Probable N-acetyltransferase family 8 member 5 from Mus musculus (Mouse).